A 588-amino-acid polypeptide reads, in one-letter code: NADP-dependent malic enzyme 2 (588 aa).

The segment at 1–21 is disordered; the sequence is MGSTPTDLPGEDVADNRSGVG. G2 carries the N-acetylglycine modification. The active-site Proton donor is the Y136. Position 189 (R189) interacts with NADP(+). K207 functions as the Proton acceptor in the catalytic mechanism. The a divalent metal cation site is built by E279, D280, and D303. Residues D303, 332–348, and N444 each bind NADP(+); that span reads LFLGAGEAGTGIAELIA.

This sequence belongs to the malic enzymes family. In terms of assembly, homohexamers and homooctamers. Mg(2+) serves as cofactor. Mn(2+) is required as a cofactor. In terms of tissue distribution, expressed in leaves, stems, flowers and roots. Particularly present in vasculatures, trichome basal cells and hydatodes.

It localises to the cytoplasm. It catalyses the reaction (S)-malate + NADP(+) = pyruvate + CO2 + NADPH. It carries out the reaction oxaloacetate + H(+) = pyruvate + CO2. With respect to regulation, activated by coenzyme A (CoA), aspartate, succinate and fumarate. Repressed by oxaloacetate, glucose and ATP. The polypeptide is NADP-dependent malic enzyme 2 (NADP-ME2) (Arabidopsis thaliana (Mouse-ear cress)).